The following is a 121-amino-acid chain: Putative membrane protein insertion efficiency factor (121 aa).

The disordered stretch occupies residues 97 to 121; it reads VPARRDRHAGGRRCCPANVDEQRST.

This sequence belongs to the UPF0161 family.

It localises to the cell membrane. Functionally, could be involved in insertion of integral membrane proteins into the membrane. The polypeptide is Putative membrane protein insertion efficiency factor (Rhodococcus jostii (strain RHA1)).